Here is a 241-residue protein sequence, read N- to C-terminus: Tumor necrosis factor receptor superfamily member 18 (241 aa).

The first 25 residues, 1–25 (MAQHGAMGAFRALCGLALLCALSLG), serve as a signal peptide directing secretion. Topologically, residues 26 to 162 (QRPTGGPGCG…CVPGSPPAEP (137 aa)) are extracellular. Disulfide bonds link Cys-34/Cys-49, Cys-74/Cys-86, Cys-81/Cys-94, Cys-115/Cys-134, and Cys-128/Cys-153. 3 TNFR-Cys repeats span residues 34 to 72 (CGPG…EWDC), 74 to 112 (CVQP…GFQC), and 115 to 153 (CASG…NAVC). Asn-146 carries N-linked (GlcNAc...) asparagine glycosylation. A helical transmembrane segment spans residues 163–183 (LGWLTVVLLAVAACVLLLTSA). Residues 184-241 (QLGLHIWQLRSQCMWPRETQLLLEVPPSTEDARSCQFPEEERGERSAEEKGRLGDLWV) are Cytoplasmic-facing. Residues 214–241 (DARSCQFPEEERGERSAEEKGRLGDLWV) form a disordered region. Residues 222 to 241 (EEERGERSAEEKGRLGDLWV) are compositionally biased toward basic and acidic residues.

In terms of assembly, binds to TRAF1, TRAF2, and TRAF3, but not TRAF5 and TRAF6. Binds through its C-terminus to SIVA1/SIVA. As to expression, expressed in lymph node, peripheral blood leukocytes and weakly in spleen.

It localises to the cell membrane. The protein resides in the secreted. Its function is as follows. Receptor for TNFSF18. Seems to be involved in interactions between activated T-lymphocytes and endothelial cells and in the regulation of T-cell receptor-mediated cell death. Mediated NF-kappa-B activation via the TRAF2/NIK pathway. The chain is Tumor necrosis factor receptor superfamily member 18 (TNFRSF18) from Homo sapiens (Human).